The following is a 129-amino-acid chain: Flagellar assembly factor FliW 2 (129 aa).

This sequence belongs to the FliW family. As to quaternary structure, interacts with translational regulator CsrA and flagellin(s).

It is found in the cytoplasm. Its function is as follows. Acts as an anti-CsrA protein, binds CsrA and prevents it from repressing translation of its target genes, one of which is flagellin. Binds to flagellin and participates in the assembly of the flagellum. This is Flagellar assembly factor FliW 2 from Helicobacter pylori (strain HPAG1).